Consider the following 94-residue polypeptide: Phosphoribosyl-ATP pyrophosphatase (94 aa).

It belongs to the PRA-PH family.

The protein localises to the cytoplasm. The enzyme catalyses 1-(5-phospho-beta-D-ribosyl)-ATP + H2O = 1-(5-phospho-beta-D-ribosyl)-5'-AMP + diphosphate + H(+). It functions in the pathway amino-acid biosynthesis; L-histidine biosynthesis; L-histidine from 5-phospho-alpha-D-ribose 1-diphosphate: step 2/9. This is Phosphoribosyl-ATP pyrophosphatase from Pyrobaculum arsenaticum (strain DSM 13514 / JCM 11321 / PZ6).